A 246-amino-acid polypeptide reads, in one-letter code: Ribonuclease PH (246 aa).

Phosphate-binding positions include Arg-91 and 129-131; that span reads GTR.

It belongs to the RNase PH family. In terms of assembly, homohexameric ring arranged as a trimer of dimers.

It carries out the reaction tRNA(n+1) + phosphate = tRNA(n) + a ribonucleoside 5'-diphosphate. Its function is as follows. Phosphorolytic 3'-5' exoribonuclease that plays an important role in tRNA 3'-end maturation. Removes nucleotide residues following the 3'-CCA terminus of tRNAs; can also add nucleotides to the ends of RNA molecules by using nucleoside diphosphates as substrates, but this may not be physiologically important. Probably plays a role in initiation of 16S rRNA degradation (leading to ribosome degradation) during starvation. This Paraburkholderia phytofirmans (strain DSM 17436 / LMG 22146 / PsJN) (Burkholderia phytofirmans) protein is Ribonuclease PH.